Here is a 125-residue protein sequence, read N- to C-terminus: Protein ApaG (125 aa).

Residues 1-125 (MADSPRVCVQ…FRLAVPTLIH (125 aa)) enclose the ApaG domain.

This is Protein ApaG from Cronobacter sakazakii (strain ATCC BAA-894) (Enterobacter sakazakii).